The primary structure comprises 49 residues: FFECTFECDIKKEGKPCKPKGCKCKDKDNKDHKKCSGGWRCKLKLCLKF.

Cystine bridges form between Cys4/Cys17, Cys8/Cys41, Cys22/Cys24, and Cys35/Cys46.

This sequence belongs to the neurotoxin 12 (Hwtx-2) family. 04 (lasiotoxin) subfamily. In terms of tissue distribution, expressed by the venom gland.

The protein localises to the secreted. In terms of biological role, toxin that causes irreversible contractile paralysis into adult Aedes aegypti resulting in 100% mortality after 24 hours. This Lasiodora klugi (Bahia scarlet tarantula) protein is U-theraphotoxin-Lk2a.